The following is a 229-amino-acid chain: Histidine biosynthesis bifunctional protein HisIE (229 aa).

The phosphoribosyl-AMP cyclohydrolase stretch occupies residues 1 to 127 (MNTLLDGIDW…APDTSALYGV (127 aa)). A phosphoribosyl-ATP pyrophosphohydrolase region spans residues 128 to 229 (VDRLYHELLA…IAEKNSRKDS (102 aa)).

In the N-terminal section; belongs to the PRA-CH family. This sequence in the C-terminal section; belongs to the PRA-PH family.

Its subcellular location is the cytoplasm. It carries out the reaction 1-(5-phospho-beta-D-ribosyl)-ATP + H2O = 1-(5-phospho-beta-D-ribosyl)-5'-AMP + diphosphate + H(+). It catalyses the reaction 1-(5-phospho-beta-D-ribosyl)-5'-AMP + H2O = 1-(5-phospho-beta-D-ribosyl)-5-[(5-phospho-beta-D-ribosylamino)methylideneamino]imidazole-4-carboxamide. Its pathway is amino-acid biosynthesis; L-histidine biosynthesis; L-histidine from 5-phospho-alpha-D-ribose 1-diphosphate: step 2/9. It participates in amino-acid biosynthesis; L-histidine biosynthesis; L-histidine from 5-phospho-alpha-D-ribose 1-diphosphate: step 3/9. This Wolinella succinogenes (strain ATCC 29543 / DSM 1740 / CCUG 13145 / JCM 31913 / LMG 7466 / NCTC 11488 / FDC 602W) (Vibrio succinogenes) protein is Histidine biosynthesis bifunctional protein HisIE.